The sequence spans 47 residues: Potassium channel toxin TcoKIK (47 aa).

Positions 14 to 47 constitute a BetaSPN-type CS-alpha/beta domain; the sequence is EYACPAIDKFCEDHCAAKKAVGKCDDFKCNCIKL. 3 disulfides stabilise this stretch: Cys-17/Cys-37, Cys-24/Cys-42, and Cys-28/Cys-44.

This sequence belongs to the long chain scorpion toxin family. Class 2 subfamily. As to expression, expressed by the venom gland.

The protein localises to the secreted. Its subcellular location is the target cell membrane. Blocks voltage-gated potassium channels. Its application (10 uM) to cells recombinantly expressing channels results in membrane damage and cell lysis. This is Potassium channel toxin TcoKIK from Tityus costatus (Brazilian scorpion).